We begin with the raw amino-acid sequence, 240 residues long: Dihydromonapterin reductase (240 aa).

The active-site Proton acceptor is Y152.

This sequence belongs to the short-chain dehydrogenases/reductases (SDR) family. FolM subfamily.

The catalysed reaction is (6S)-5,6,7,8-tetrahydrofolate + NADP(+) = 7,8-dihydrofolate + NADPH + H(+). It carries out the reaction 7,8-dihydromonapterin + NADPH + H(+) = 5,6,7,8-tetrahydromonapterin + NADP(+). Its function is as follows. Catalyzes the reduction of dihydromonapterin to tetrahydromonapterin. Also has lower activity with dihydrofolate. This is Dihydromonapterin reductase (folM) from Shigella flexneri serotype 5b (strain 8401).